Here is a 346-residue protein sequence, read N- to C-terminus: Probable RNA methyltransferase Pmen_2155 (346 aa).

Residue Glu-91 is the Proton acceptor of the active site. The region spanning 94 to 320 (LLPRDGLCIS…TKVRNSAGQD (227 aa)) is the Radical SAM core domain. Cys-101 and Cys-325 are disulfide-bonded. 3 residues coordinate [4Fe-4S] cluster: Cys-108, Cys-112, and Cys-115. S-adenosyl-L-methionine-binding positions include 153–154 (GE), Ser-183, 206–208 (SLH), and Asn-282. Cys-325 serves as the catalytic S-methylcysteine intermediate.

The protein belongs to the radical SAM superfamily. RlmN family. It depends on [4Fe-4S] cluster as a cofactor.

It localises to the cytoplasm. The polypeptide is Probable RNA methyltransferase Pmen_2155 (Ectopseudomonas mendocina (strain ymp) (Pseudomonas mendocina)).